The sequence spans 276 residues: Probable endonuclease 4 (276 aa).

Zn(2+)-binding residues include H70, H108, E143, D176, H179, H210, D223, H225, and E255.

This sequence belongs to the AP endonuclease 2 family. Requires Zn(2+) as cofactor.

It catalyses the reaction Endonucleolytic cleavage to 5'-phosphooligonucleotide end-products.. In terms of biological role, endonuclease IV plays a role in DNA repair. It cleaves phosphodiester bonds at apurinic or apyrimidinic (AP) sites, generating a 3'-hydroxyl group and a 5'-terminal sugar phosphate. This is Probable endonuclease 4 from Mesomycoplasma hyopneumoniae (strain 7448) (Mycoplasma hyopneumoniae).